The sequence spans 240 residues: Fatty acid metabolism regulator protein (240 aa).

The 69-residue stretch at 6 to 74 folds into the HTH gntR-type domain; sequence KGPASFAEKY…HGKPTRVNNF (69 aa). Residues 34-53 constitute a DNA-binding region (H-T-H motif); the sequence is ERELSELIGVTRTTLREVLQ.

Homodimer.

The protein localises to the cytoplasm. Multifunctional regulator of fatty acid metabolism. The polypeptide is Fatty acid metabolism regulator protein (Shewanella amazonensis (strain ATCC BAA-1098 / SB2B)).